Consider the following 486-residue polypeptide: Corytuberine synthase (486 aa).

Residues Ala6–Leu21 traverse the membrane as a helical segment. Cys428 is a binding site for heme.

It belongs to the cytochrome P450 family. The cofactor is heme.

The protein resides in the endoplasmic reticulum membrane. The enzyme catalyses (S)-reticuline + reduced [NADPH--hemoprotein reductase] + O2 = (S)-corytuberine + oxidized [NADPH--hemoprotein reductase] + 2 H2O + 2 H(+). Its activity is regulated as follows. Inhibited by ketoconazole. Functionally, cytochrome P450 that catalyzes an intramolecular C-C phenol coupling of (S)-reticuline in magnoflorine biosynthesis. Catalyzes the formation of (S)-corytuberine from (S)-reticuline, and also, with a lover efficiency, the 4'-O-demethylation of codamine to produce orientaline, and subsequent C-C-phenol coupling of orientaline. Can also use (R,S)-norreticuline, (R,S)-orientaline, (S)-N-methylcoclaurine and (S)-coclaurine as substrates, but not (R,S)-6-O-methyllaudanosoline, (R,S)-6-O-methylnorlaudanosoline, (R,S)-laudanine, (R,S)-norlaudanine, (R,S)-4'-O-methyllaudanosoline, (R,S)-pseudocodamine, (R,S)-norpseudocodamine, (R,S)-laudanosine, (R,S)-norlaudanosine, (R,S)-laudanosoline or (R,S)-norlaudanosoline. The polypeptide is Corytuberine synthase (Coptis japonica (Japanese goldthread)).